A 332-amino-acid polypeptide reads, in one-letter code: DNA-directed RNA polymerase subunit alpha (332 aa).

Positions 1–234 (MIEYVIPKKL…NHLQIITDSL (234 aa)) are alpha N-terminal domain (alpha-NTD). The segment at 264–332 (AVYSKKIDEL…KFGLSLKKGG (69 aa)) is alpha C-terminal domain (alpha-CTD).

It belongs to the RNA polymerase alpha chain family. Homodimer. The RNAP catalytic core consists of 2 alpha, 1 beta, 1 beta' and 1 omega subunit. When a sigma factor is associated with the core the holoenzyme is formed, which can initiate transcription.

The enzyme catalyses RNA(n) + a ribonucleoside 5'-triphosphate = RNA(n+1) + diphosphate. Its function is as follows. DNA-dependent RNA polymerase catalyzes the transcription of DNA into RNA using the four ribonucleoside triphosphates as substrates. This Pseudothermotoga lettingae (strain ATCC BAA-301 / DSM 14385 / NBRC 107922 / TMO) (Thermotoga lettingae) protein is DNA-directed RNA polymerase subunit alpha.